The following is a 545-amino-acid chain: Ubiquitin carboxyl-terminal hydrolase 17-like protein C (545 aa).

The USP domain occupies 51-348 (CGLQNTGNSC…NAYVLFYVQQ (298 aa)). C60 acts as the Nucleophile in catalysis. The Proton acceptor role is filled by H307. Disordered regions lie at residues 368-442 (DPEY…QKLG) and 489-539 (WGRD…KQGQ). The segment covering 374 to 385 (KKSRRKKHKKKS) has biased composition (basic residues). 2 stretches are compositionally biased toward basic and acidic residues: residues 393–404 (EPCKNREKRATK) and 489–505 (WGRD…HNAD). A compositionally biased stretch (polar residues) spans 508–519 (LTSQDPVNTGQL). The segment covering 524–537 (GRRRSKKGKNKNKQ) has biased composition (basic residues).

It belongs to the peptidase C19 family. USP17 subfamily. In terms of tissue distribution, expressed in T cells.

The protein resides in the nucleus. It localises to the endoplasmic reticulum. It carries out the reaction Thiol-dependent hydrolysis of ester, thioester, amide, peptide and isopeptide bonds formed by the C-terminal Gly of ubiquitin (a 76-residue protein attached to proteins as an intracellular targeting signal).. In terms of biological role, deubiquitinating enzyme that removes conjugated ubiquitin from specific proteins to regulate different cellular processes. Important for preimplantation stage embryonic development. The sequence is that of Ubiquitin carboxyl-terminal hydrolase 17-like protein C from Mus musculus (Mouse).